The following is an 800-amino-acid chain: Protein translocase subunit SecA (800 aa).

ATP contacts are provided by residues glutamine 85, 103-107, and aspartate 504; that span reads GEGKT.

The protein belongs to the SecA family. As to quaternary structure, monomer and homodimer. Part of the essential Sec protein translocation apparatus which comprises SecA, SecYEG and auxiliary proteins SecDF. Other proteins may also be involved.

Its subcellular location is the cell membrane. The protein resides in the cytoplasm. The catalysed reaction is ATP + H2O + cellular proteinSide 1 = ADP + phosphate + cellular proteinSide 2.. Part of the Sec protein translocase complex. Interacts with the SecYEG preprotein conducting channel. Has a central role in coupling the hydrolysis of ATP to the transfer of proteins into and across the cell membrane, serving as an ATP-driven molecular motor driving the stepwise translocation of polypeptide chains across the membrane. In Lactobacillus delbrueckii subsp. bulgaricus (strain ATCC 11842 / DSM 20081 / BCRC 10696 / JCM 1002 / NBRC 13953 / NCIMB 11778 / NCTC 12712 / WDCM 00102 / Lb 14), this protein is Protein translocase subunit SecA.